Reading from the N-terminus, the 766-residue chain is Dipeptidyl peptidase 4 (766 aa).

At 1-6 (MKTPWK) the chain is on the cytoplasmic side. A helical; Signal-anchor for type II membrane protein transmembrane segment spans residues 7–28 (VLLGLLGAAALVTIITVPVVLL). Residues 29 to 766 (NKGTDDATAD…HFIKQCFSLP (738 aa)) are Extracellular-facing. Residues asparagine 85, asparagine 92, asparagine 150, asparagine 219, asparagine 229, asparagine 281, and asparagine 321 are each glycosylated (N-linked (GlcNAc...) asparagine). 4 cysteine pairs are disulfide-bonded: cysteine 328/cysteine 339, cysteine 385/cysteine 394, cysteine 444/cysteine 447, and cysteine 454/cysteine 472. N-linked (GlcNAc...) asparagine glycosylation occurs at asparagine 520. Serine 630 (charge relay system) is an active-site residue. Cysteine 649 and cysteine 762 are oxidised to a cystine. An N-linked (GlcNAc...) asparagine glycan is attached at asparagine 685. Residues aspartate 708 and histidine 740 each act as charge relay system in the active site.

The protein belongs to the peptidase S9B family. DPPIV subfamily. Monomer. Homodimer. Heterodimer with Seprase (FAP). Requires homodimerization for optimal dipeptidyl peptidase activity and T-cell costimulation. Found in a membrane raft complex, at least composed of BCL10, CARD11, DPP4 and IKBKB. Associates with collagen. Interacts with PTPRC; the interaction is enhanced in an interleukin-12-dependent manner in activated lymphocytes. Interacts (via extracellular domain) with ADA; does not inhibit its dipeptidyl peptidase activity. Interacts with CAV1 (via the N-terminus); the interaction is direct. Interacts (via cytoplasmic tail) with CARD11 (via PDZ domain); its homodimerization is necessary for interaction with CARD11. Interacts with IGF2R; the interaction is direct. Interacts with GPC3. Interacts with human coronavirus-EMC spike protein and acts as a receptor for this virus. As to quaternary structure, (Microbial infection) Interacts with MERS coronavirus/MERS-CoV spike protein. The soluble form (Dipeptidyl peptidase 4 soluble form also named SDPP) derives from the membrane form (Dipeptidyl peptidase 4 membrane form also named MDPP) by proteolytic processing. Post-translationally, N- and O-Glycosylated. In terms of processing, phosphorylated. Mannose 6-phosphate residues in the carbohydrate moiety are necessary for interaction with IGF2R in activated T-cells. Mannose 6-phosphorylation is induced during T-cell activation. Expressed specifically in lymphatic vessels but not in blood vessels in the skin, small intestine, esophagus, ovary, breast and prostate glands. Not detected in lymphatic vessels in the lung, kidney, uterus, liver and stomach (at protein level). Expressed in the poorly differentiated crypt cells of the small intestine as well as in the mature villous cells. Expressed at very low levels in the colon.

It is found in the secreted. The protein resides in the cell membrane. Its subcellular location is the apical cell membrane. The protein localises to the cell projection. It localises to the invadopodium membrane. It is found in the lamellipodium membrane. The protein resides in the cell junction. Its subcellular location is the membrane raft. The enzyme catalyses Release of an N-terminal dipeptide, Xaa-Yaa-|-Zaa-, from a polypeptide, preferentially when Yaa is Pro, provided Zaa is neither Pro nor hydroxyproline.. Inhibited by GPC3 and diprotin A. In terms of biological role, cell surface glycoprotein receptor involved in the costimulatory signal essential for T-cell receptor (TCR)-mediated T-cell activation. Acts as a positive regulator of T-cell coactivation, by binding at least ADA, CAV1, IGF2R, and PTPRC. Its binding to CAV1 and CARD11 induces T-cell proliferation and NF-kappa-B activation in a T-cell receptor/CD3-dependent manner. Its interaction with ADA also regulates lymphocyte-epithelial cell adhesion. In association with FAP is involved in the pericellular proteolysis of the extracellular matrix (ECM), the migration and invasion of endothelial cells into the ECM. May be involved in the promotion of lymphatic endothelial cells adhesion, migration and tube formation. When overexpressed, enhanced cell proliferation, a process inhibited by GPC3. Also acts as a serine exopeptidase with a dipeptidyl peptidase activity that regulates various physiological processes by cleaving peptides in the circulation, including many chemokines, mitogenic growth factors, neuropeptides and peptide hormones such as brain natriuretic peptide 32. Removes N-terminal dipeptides sequentially from polypeptides having unsubstituted N-termini provided that the penultimate residue is proline. Its function is as follows. (Microbial infection) Acts as a receptor for human coronavirus MERS-CoV-2. In Homo sapiens (Human), this protein is Dipeptidyl peptidase 4.